Reading from the N-terminus, the 214-residue chain is Ribosomal RNA large subunit methyltransferase E (214 aa).

The S-adenosyl-L-methionine site is built by Gly60, Trp62, Asp86, Asp102, and Asp127. The Proton acceptor role is filled by Lys167.

The protein belongs to the class I-like SAM-binding methyltransferase superfamily. RNA methyltransferase RlmE family.

The protein resides in the cytoplasm. It catalyses the reaction uridine(2552) in 23S rRNA + S-adenosyl-L-methionine = 2'-O-methyluridine(2552) in 23S rRNA + S-adenosyl-L-homocysteine + H(+). In terms of biological role, specifically methylates the uridine in position 2552 of 23S rRNA at the 2'-O position of the ribose in the fully assembled 50S ribosomal subunit. This Herminiimonas arsenicoxydans protein is Ribosomal RNA large subunit methyltransferase E.